A 453-amino-acid chain; its full sequence is Probable glycine dehydrogenase (decarboxylating) subunit 1 (453 aa).

Belongs to the GcvP family. N-terminal subunit subfamily. In terms of assembly, the glycine cleavage system is composed of four proteins: P, T, L and H. In this organism, the P 'protein' is a heterodimer of two subunits.

The enzyme catalyses N(6)-[(R)-lipoyl]-L-lysyl-[glycine-cleavage complex H protein] + glycine + H(+) = N(6)-[(R)-S(8)-aminomethyldihydrolipoyl]-L-lysyl-[glycine-cleavage complex H protein] + CO2. The glycine cleavage system catalyzes the degradation of glycine. The P protein binds the alpha-amino group of glycine through its pyridoxal phosphate cofactor; CO(2) is released and the remaining methylamine moiety is then transferred to the lipoamide cofactor of the H protein. The protein is Probable glycine dehydrogenase (decarboxylating) subunit 1 of Dictyoglomus turgidum (strain DSM 6724 / Z-1310).